A 371-amino-acid polypeptide reads, in one-letter code: Cytochrome b (371 aa).

4 helical membrane passes run 25–45 (FGSM…FLAV), 69–90 (WMMQ…YIHI), 105–125 (WMSG…GYVL), and 170–190 (FFAL…LHVI). 2 residues coordinate heme b: His-75 and His-89. Heme b is bound by residues His-174 and His-188. His-193 serves as a coordination point for a ubiquinone. The next 4 membrane-spanning stretches (helical) occupy residues 218–238 (YKDL…VSFF), 280–300 (LGGA…PFTH), 312–332 (LSQL…WAAT), and 339–358 (FIII…ISTP).

Belongs to the cytochrome b family. The cytochrome bc1 complex contains 3 respiratory subunits (MT-CYB, CYC1 and UQCRFS1), 2 core proteins (UQCRC1 and UQCRC2) and probably 6 low-molecular weight proteins. It depends on heme b as a cofactor.

Its subcellular location is the mitochondrion inner membrane. Component of the ubiquinol-cytochrome c reductase complex (complex III or cytochrome b-c1 complex) that is part of the mitochondrial respiratory chain. The b-c1 complex mediates electron transfer from ubiquinol to cytochrome c. Contributes to the generation of a proton gradient across the mitochondrial membrane that is then used for ATP synthesis. The protein is Cytochrome b (MT-CYB) of Python sebae (African rock python).